The sequence spans 1331 residues: Contactin-associated protein-like 2 (1331 aa).

A signal peptide spans 1-27 (MLAAPRAGCGAALLLWIVSSCLCRAWT). Topologically, residues 28–1262 (APSTSQKCDE…IRNGVNRNSA (1235 aa)) are extracellular. In terms of domain architecture, F5/8 type C spans 35–181 (CDEPLVSGLP…IGLRIEVYGC (147 aa)). An intrachain disulfide couples Cys-35 to Cys-181. Laminin G-like domains follow at residues 187–368 (VINF…SFSC) and 373–552 (TVPV…IDMC). N-linked (GlcNAc...) asparagine glycans are attached at residues Asn-289, Asn-346, Asn-363, Asn-379, Asn-436, Asn-506, Asn-507, and Asn-546. The cysteines at positions 336 and 368 are disulfide-linked. 4 disulfides stabilise this stretch: Cys-520/Cys-552, Cys-558/Cys-569, Cys-563/Cys-578, and Cys-580/Cys-590. The region spanning 554-591 (IIDRCVPNHCERGGKCSQTWDSFKCTCDETGYTGATCH) is the EGF-like 1 domain. Residues 592 to 798 (NSIYEPSCEA…LRCQGDRNYW (207 aa)) form the Fibrinogen C-terminal domain. Asn-630 and Asn-735 each carry an N-linked (GlcNAc...) asparagine glycan. The Laminin G-like 3 domain maps to 799–963 (NAASFPNPSS…KVTSGFISGC (165 aa)). Intrachain disulfides connect Cys-936-Cys-963, Cys-967-Cys-980, Cys-974-Cys-989, and Cys-991-Cys-1001. The EGF-like 2 domain maps to 964 to 1002 (SGHCTSYGTNCENGGKCLERYHGYSCDCSNTAYDGTFCN). The region spanning 1023 to 1214 (ATNARDSSSR…IQGELVESNC (192 aa)) is the Laminin G-like 4 domain. Residues Asn-1116 and Asn-1198 are each glycosylated (N-linked (GlcNAc...) asparagine). The cysteines at positions 1178 and 1214 are disulfide-linked. Residues 1263–1283 (IIGGVIAVVIFTILCTLVFLI) form a helical membrane-spanning segment. Residues 1284–1331 (RYMFRHKGTYHTNEAKGAESAESADAAIMNNDPNFTETIDESKKEWLI) are Cytoplasmic-facing. Residues Ser-1303 and Ser-1306 each carry the phosphoserine modification.

The protein belongs to the neurexin family. As to quaternary structure, interacts (via C-terminus) with KCNA2.

It localises to the membrane. The protein resides in the cell projection. It is found in the axon. The protein localises to the cell junction. Its subcellular location is the paranodal septate junction. Functionally, required for gap junction formation. Required, with CNTNAP1, for radial and longitudinal organization of myelinated axons. Plays a role in the formation of functional distinct domains critical for saltatory conduction of nerve impulses in myelinated nerve fibers. Demarcates the juxtaparanodal region of the axo-glial junction. The protein is Contactin-associated protein-like 2 (CNTNAP2) of Pongo abelii (Sumatran orangutan).